A 1643-amino-acid polypeptide reads, in one-letter code: Neurexin-3 (1643 aa).

The first 27 residues, 1 to 27 (MSSTLHSVFFTLKVSILLGSLLGLCLG), serve as a signal peptide directing secretion. The region spanning 28–202 (LEFMGLPNQW…GVQMDAEGPC (175 aa)) is the Laminin G-like 1 domain. At 28–1568 (LEFMGLPNQW…EVIRESSSTT (1541 aa)) the chain is on the extracellular side. N-linked (GlcNAc...) asparagine glycosylation is found at N58 and N105. Residues 198–235 (AEGPCGERPCENGGICFLLDGHPTCDCSTTGYGGKLCS) form the EGF-like 1 domain. 3 disulfide bridges follow: C202-C213, C207-C222, and C224-C234. Laminin G-like domains are found at residues 258–440 (VATF…VFKC) and 447–639 (DPIN…KSSC). Ca(2+)-binding residues include D304, L321, and M374. Intrachain disulfides connect C404/C440, C610/C639, C647/C658, C652/C667, and C669/C679. The 38-residue stretch at 643 to 680 (SAKQCDSYPCKNNAVCKDGWNRFICDCTGTGYWGRTCE) folds into the EGF-like 2 domain. Laminin G-like domains lie at 685–857 (ILSY…IDYC) and 871–1046 (DPVT…ERGC). Positions 732 and 749 each coordinate Ca(2+). N-linked (GlcNAc...) asparagine glycosylation occurs at N757. A Ca(2+)-binding site is contributed by R807. Intrachain disulfides connect C1018-C1046, C1053-C1064, C1058-C1073, and C1075-C1085. The EGF-like 3 domain occupies 1049-1086 (PSTTCQEDSCANQGVCMQQWEGFTCDCSMTSYSGNQCN). The 171-residue stretch at 1090–1260 (ATYIFGKSGG…NPNIKINGSV (171 aa)) folds into the Laminin G-like 6 domain. D1142 and I1159 together coordinate Ca(2+). N-linked (GlcNAc...) asparagine glycosylation is present at N1189. Ca(2+)-binding residues include I1211 and N1213. 2 N-linked (GlcNAc...) asparagine glycosylation sites follow: N1257 and N1301. A disordered region spans residues 1294 to 1318 (ATTTTRKNRSTASIQPTSDDLVSSA). Polar residues predominate over residues 1303–1318 (STASIQPTSDDLVSSA). S1317 carries O-linked (Xyl...) (heparan sulfate) serine glycosylation. A helical membrane pass occupies residues 1569 to 1589 (GMVVGIVAAAALCILILLYAM). At 1590-1643 (YKYRNRDEGSYQVDETRNYISNSAQSNGTLMKEKQQSSKSGHKKQKNKDREYYV) the chain is on the cytoplasmic side. Residues 1611–1643 (NSAQSNGTLMKEKQQSSKSGHKKQKNKDREYYV) are disordered.

It belongs to the neurexin family. The laminin G-like domain 2 binds to NXPH1. Specific isoforms bind to alpha-dystroglycan. The cytoplasmic C-terminal region binds to CASK. Specific isoforms bind neuroligins NLGN1, NLGN2 and NLGN3. Interacts with CLSTN3. Post-translationally, O-glycosylated; contains heparan sulfate. Heparan sulfate attachment is required for synapse development by mediating interactions with neuroligins. In terms of tissue distribution, expressed in the blood vessel walls (at protein level). Highly expressed in brain, lung, and pancreas; a lower level of expression is detectable in heart, placenta, liver, and kidney, whereas no expression can be observed in skeletal muscle. Isoform 4a is heart-specific.

It localises to the presynaptic cell membrane. Neuronal cell surface protein that may be involved in cell recognition and cell adhesion. May mediate intracellular signaling. This chain is Neurexin-3 (NRXN3), found in Homo sapiens (Human).